The following is a 528-amino-acid chain: Galactokinase (528 aa).

Alpha-D-galactose-binding residues include arginine 53, glutamate 59, histidine 60, and aspartate 62. The ATP site is built by glycine 165, glycine 167, serine 169, and serine 170. 2 residues coordinate alpha-D-galactose: asparagine 213 and aspartate 217. Residue aspartate 217 is the Proton acceptor of the active site. Residues serine 264, asparagine 265, and lysine 266 each contribute to the ATP site. An alpha-D-galactose-binding site is contributed by tyrosine 274. Serine 381 is modified (phosphoserine).

The protein belongs to the GHMP kinase family. GalK subfamily.

It carries out the reaction alpha-D-galactose + ATP = alpha-D-galactose 1-phosphate + ADP + H(+). The protein operates within carbohydrate metabolism; galactose metabolism. Functionally, galactokinase is a key enzyme in the galactose metabolism where it catalyzes the conversion of alpha-D-galactose to galactose 1-phosphate. Can also induce the transcription of the yeast GAL genes in response to the organism being challenged with galactose as the sole source of carbon. It's striking amino acid sequence similarity to GAL3 might explain its GAL3-like induction activity. The protein is Galactokinase of Saccharomyces cerevisiae (strain ATCC 204508 / S288c) (Baker's yeast).